Here is a 129-residue protein sequence, read N- to C-terminus: uncharacterized protein (129 aa).

Belongs to the HesB/IscA family.

This is an uncharacterized protein from Buchnera aphidicola subsp. Schizaphis graminum (strain Sg).